Reading from the N-terminus, the 712-residue chain is Amine oxidase [copper-containing] gamma 1 (712 aa).

The signal sequence occupies residues M1 to S24. N-linked (GlcNAc...) asparagine glycans are attached at residues N146 and N173. Cysteines 188 and 210 form a disulfide. Y352–T363 serves as a coordination point for substrate. D354 serves as the catalytic Proton acceptor. The cysteines at positions 373 and 399 are disulfide-linked. Substrate is bound at residue V439 to Y444. The active-site Schiff-base intermediate with substrate; via topaquinone is Y442. 2',4',5'-topaquinone is present on Y442. H499 and H501 together coordinate Cu cation. The Mn(2+) site is built by D508, M509, and D510. N-linked (GlcNAc...) asparagine glycosylation is found at N516 and N617. Residues D651 and I652 each contribute to the Mn(2+) site. H662 is a Cu cation binding site.

It belongs to the copper/topaquinone oxidase family. As to quaternary structure, homodimer. It depends on Cu cation as a cofactor. The cofactor is Zn(2+). L-topaquinone serves as cofactor. Requires Mn(2+) as cofactor. Post-translationally, topaquinone (TPQ) is generated by copper-dependent autoxidation of a specific tyrosyl residue. Mostly expressed in roots, stems and flowers, and, at lower levels, in leaves and cotyledons.

The protein localises to the secreted. The protein resides in the extracellular space. It is found in the apoplast. The catalysed reaction is a primary methyl amine + O2 + H2O = an aldehyde + H2O2 + NH4(+). The protein operates within amine and polyamine degradation; putrescine degradation. Copper amine oxidase that can use putrescine and spermidine as substrates. Required for abscisic acid- (ABA) and polyamine- (PA) and H(2)O(2)-dependent induced nitric oxide (NO) biosynthesis. Involved in ABA signal transduction and in responses to osmotic stress. In Arabidopsis thaliana (Mouse-ear cress), this protein is Amine oxidase [copper-containing] gamma 1.